We begin with the raw amino-acid sequence, 154 residues long: Large ribosomal subunit protein uL22 (154 aa).

It belongs to the universal ribosomal protein uL22 family. Part of the 50S ribosomal subunit.

Its function is as follows. This protein binds specifically to 23S rRNA. It makes multiple contacts with different domains of the 23S rRNA in the assembled 50S subunit and ribosome. Functionally, the globular domain of the protein is located near the polypeptide exit tunnel on the outside of the subunit, while an extended beta-hairpin is found that lines the wall of the exit tunnel in the center of the 70S ribosome. The sequence is that of Large ribosomal subunit protein uL22 from Natronomonas pharaonis (strain ATCC 35678 / DSM 2160 / CIP 103997 / JCM 8858 / NBRC 14720 / NCIMB 2260 / Gabara) (Halobacterium pharaonis).